The chain runs to 367 residues: MTPNILPIESYDHQLAEKSARLKAMMLPFQAPEPEIFRSPADHYRMRAEFRVWHDEDDLYHIMFDQQTKQRIRVEQFPVASRLINRLMDALMTAIRAEPLLRRKLFQIDYLSTLSGKLIASLLYHRQLDEEWQQKALELRDQLRAQGFDLQLIGRAAKTKIMLDHDYIDEVLPVAGREMIYRQVENSFTQPNAAVNIHMLEWALDVTQGATGDLLELYCGNGNFSLALARNFERVLATEIAKPSVAAAQYNIAANNIDNVQIIRMSAEEFTQAMQGVREFNRLKGIDLGSYNCETIFVDPPRSGLDHETVKLVQAYPRILYISCNPETLCANLEQLQHTHKISRLALFDQFPYTHHMECGVLLEKRH.

Residues glutamine 190, tyrosine 218, asparagine 223, glutamate 239, and aspartate 299 each coordinate S-adenosyl-L-methionine. Cysteine 324 acts as the Nucleophile in catalysis. The active-site Proton acceptor is the glutamate 358.

It belongs to the class I-like SAM-binding methyltransferase superfamily. RNA M5U methyltransferase family. TrmA subfamily.

It catalyses the reaction uridine(54) in tRNA + S-adenosyl-L-methionine = 5-methyluridine(54) in tRNA + S-adenosyl-L-homocysteine + H(+). It carries out the reaction uridine(341) in tmRNA + S-adenosyl-L-methionine = 5-methyluridine(341) in tmRNA + S-adenosyl-L-homocysteine + H(+). Functionally, dual-specificity methyltransferase that catalyzes the formation of 5-methyluridine at position 54 (m5U54) in all tRNAs, and that of position 341 (m5U341) in tmRNA (transfer-mRNA). This is tRNA/tmRNA (uracil-C(5))-methyltransferase from Yersinia pestis bv. Antiqua (strain Antiqua).